We begin with the raw amino-acid sequence, 76 residues long: Large ribosomal subunit protein bL31 (76 aa).

Belongs to the bacterial ribosomal protein bL31 family. Type A subfamily. Part of the 50S ribosomal subunit.

Binds the 23S rRNA. This chain is Large ribosomal subunit protein bL31, found in Rhizorhabdus wittichii (strain DSM 6014 / CCUG 31198 / JCM 15750 / NBRC 105917 / EY 4224 / RW1) (Sphingomonas wittichii).